We begin with the raw amino-acid sequence, 323 residues long: tRNA U34 carboxymethyltransferase (323 aa).

Carboxy-S-adenosyl-L-methionine is bound by residues Lys-91, Trp-105, Lys-110, Gly-130, 181 to 182, Met-196, Tyr-200, and Arg-315; that span reads IE.

The protein belongs to the class I-like SAM-binding methyltransferase superfamily. CmoB family. In terms of assembly, homotetramer.

It carries out the reaction carboxy-S-adenosyl-L-methionine + 5-hydroxyuridine(34) in tRNA = 5-carboxymethoxyuridine(34) in tRNA + S-adenosyl-L-homocysteine + H(+). Functionally, catalyzes carboxymethyl transfer from carboxy-S-adenosyl-L-methionine (Cx-SAM) to 5-hydroxyuridine (ho5U) to form 5-carboxymethoxyuridine (cmo5U) at position 34 in tRNAs. In Yersinia pseudotuberculosis serotype O:1b (strain IP 31758), this protein is tRNA U34 carboxymethyltransferase.